The following is a 400-amino-acid chain: Serine/threonine transporter SstT (400 aa).

The next 10 helical transmembrane spans lie at 11–31 (IGLV…GWLA), 45–65 (FVGA…MAAI), 81–101 (IMYM…SFLF), 138–158 (AIAE…GFAL), 175–195 (AISQ…LGLV), 213–233 (ILMV…PLII), 242–264 (YPLV…SSAA), 295–315 (MAGA…TLGI), 327–347 (LVAT…LLLI), and 354–374 (FSIP…IGVI).

This sequence belongs to the dicarboxylate/amino acid:cation symporter (DAACS) (TC 2.A.23) family.

The protein localises to the cell inner membrane. It catalyses the reaction L-serine(in) + Na(+)(in) = L-serine(out) + Na(+)(out). The enzyme catalyses L-threonine(in) + Na(+)(in) = L-threonine(out) + Na(+)(out). Its function is as follows. Involved in the import of serine and threonine into the cell, with the concomitant import of sodium (symport system). The polypeptide is Serine/threonine transporter SstT (Psychrobacter cryohalolentis (strain ATCC BAA-1226 / DSM 17306 / VKM B-2378 / K5)).